The chain runs to 486 residues: Probable transporter MCH1 (486 aa).

The next 6 helical transmembrane spans lie at 31–51, 69–89, 91–111, 132–152, 164–184, and 204–224; these read ISFFISLFSCLTSGSIMLFSL, FIASLSAIGMYLCLPVLGYLA, CYGPSLLSLISIWFFVPSYFV, FGICFFFIGLATSSLYFSSLL, LAISLPVTCYGLSTLLGSQLM, and FFGVLYLVMGILNFVSSSVVS. The tract at residues 236-260 is disordered; it reads EMEEADEESPLMTSRSRHSHHSCED. Residues 280–300 form a helical membrane-spanning segment; that stretch reads FINFLKDKSAWLLLASLILNI. The N-linked (GlcNAc...) asparagine glycan is linked to Asn322. 2 helical membrane passes run 327-348 and 357-377; these read VSIMAASSTVTRLAMGGLSDYL and ICRVNLLIINLAIGIVGQFMV. N-linked (GlcNAc...) asparagine glycosylation occurs at Asn390. Transmembrane regions (helical) follow at residues 395–415 and 417–437; these read GGLFTIYPTIVASIWGIDMMG and TWGSFMIAPAIGSIGFSIFYG. Asn457 carries N-linked (GlcNAc...) asparagine glycosylation. A helical transmembrane segment spans residues 458 to 478; sequence LTAVGLSVSLILIIIVWKGIW.

The protein belongs to the major facilitator superfamily.

It localises to the vacuole membrane. In terms of biological role, probable transporter. This is Probable transporter MCH1 (MCH1) from Debaryomyces hansenii (strain ATCC 36239 / CBS 767 / BCRC 21394 / JCM 1990 / NBRC 0083 / IGC 2968) (Yeast).